The following is a 199-amino-acid chain: Thymidine kinase (199 aa).

Residues 15 to 22 (GSMFSGKS) and 88 to 91 (DEVQ) contribute to the ATP site. The active-site Proton acceptor is Glu-89. Residues Cys-145, Cys-148, Cys-183, and His-186 each coordinate Zn(2+).

The protein belongs to the thymidine kinase family. In terms of assembly, homotetramer.

The protein localises to the cytoplasm. The enzyme catalyses thymidine + ATP = dTMP + ADP + H(+). The chain is Thymidine kinase from Staphylococcus aureus (strain Mu50 / ATCC 700699).